Here is a 222-residue protein sequence, read N- to C-terminus: MSVLLPLCLIISMFTYSNAAYCLCKEGNEQVLQKAIDYACGNGADCTQIQPTGACYQPNTVKNHCDVAVNSYYQKKASSGATCDFNGAASPSTTPPSTASNCLTGSSSSGTPTTGTPTTGTPTSGTPTTGTPTTGTPTTGTPTSGTPTSGFPNTGTPNTGTNTGMPNSNGMPTSSSSSVFPGTTLGPTGSGGLGDPNAGEKLSVRTNTVVFLLTGVAAMLVI.

Positions 1–19 (MSVLLPLCLIISMFTYSNA) are cleaved as a signal peptide. Cysteines 22 and 83 form a disulfide. The segment covering 88-187 (AASPSTTPPS…SVFPGTTLGP (100 aa)) has biased composition (low complexity). The interval 88–199 (AASPSTTPPS…SGGLGDPNAG (112 aa)) is disordered. Residue N197 is the site of GPI-anchor amidated asparagine attachment. Residues 198–222 (AGEKLSVRTNTVVFLLTGVAAMLVI) constitute a propeptide, removed in mature form.

Contains two additional disulfide bonds.

The protein localises to the cell membrane. It is found in the cell junction. It localises to the plasmodesma. This Arabidopsis thaliana (Mouse-ear cress) protein is PLASMODESMATA CALLOSE-BINDING PROTEIN 4 (PDCB4).